The primary structure comprises 228 residues: UPF0758 protein SAB1521c (228 aa).

One can recognise an MPN domain in the interval 102-224 (KITQPSDVAD…FTSLVEAGYF (123 aa)). Zn(2+)-binding residues include H173, H175, and D186. A JAMM motif motif is present at residues 173–186 (HNHPSGDVTPSQED).

The protein belongs to the UPF0758 family.

The chain is UPF0758 protein SAB1521c from Staphylococcus aureus (strain bovine RF122 / ET3-1).